We begin with the raw amino-acid sequence, 539 residues long: Phosphoenolpyruvate carboxykinase (ATP) (539 aa).

The substrate site is built by Arg64, Tyr206, and Lys212. Residues Lys212, His231, and 247 to 255 (GLSGTGKTT) contribute to the ATP site. Mn(2+) contacts are provided by Lys212 and His231. A Mn(2+)-binding site is contributed by Asp268. ATP is bound by residues Glu296, Arg332, 448–449 (RI), and Thr454. Arg332 serves as a coordination point for substrate.

It belongs to the phosphoenolpyruvate carboxykinase (ATP) family. In terms of assembly, monomer. The cofactor is Mn(2+).

The protein localises to the cytoplasm. The catalysed reaction is oxaloacetate + ATP = phosphoenolpyruvate + ADP + CO2. It functions in the pathway carbohydrate biosynthesis; gluconeogenesis. Functionally, involved in the gluconeogenesis. Catalyzes the conversion of oxaloacetate (OAA) to phosphoenolpyruvate (PEP) through direct phosphoryl transfer between the nucleoside triphosphate and OAA. This is Phosphoenolpyruvate carboxykinase (ATP) from Edwardsiella ictaluri (strain 93-146).